A 265-amino-acid chain; its full sequence is AT-hook motif nuclear-localized protein 18 (265 aa).

Residues 1–75 form a disordered region; that stretch reads MDEVSRSHTP…AGSKNKPKAP (75 aa). Positions 19-30 are enriched in basic residues; sequence HYHHQNAGRQKR. The a.T hook DNA-binding region spans 59-71; the sequence is RRPRGRPAGSKNK. Residues 83–217 form the PPC domain; sequence ANAFRCHVME…EEEETEREID (135 aa).

The protein localises to the nucleus. Functionally, transcription factor that specifically binds AT-rich DNA sequences related to the nuclear matrix attachment regions (MARs). Acts redundantly with AHL22, AHL27 and AHL29 in the regulation of flowering and regulation of the hypocotyl elongation. In Arabidopsis thaliana (Mouse-ear cress), this protein is AT-hook motif nuclear-localized protein 18.